We begin with the raw amino-acid sequence, 93 residues long: Cell division topological specificity factor (93 aa).

The protein belongs to the MinE family.

Functionally, prevents the cell division inhibition by proteins MinC and MinD at internal division sites while permitting inhibition at polar sites. This ensures cell division at the proper site by restricting the formation of a division septum at the midpoint of the long axis of the cell. The sequence is that of Cell division topological specificity factor from Agathobacter rectalis (strain ATCC 33656 / DSM 3377 / JCM 17463 / KCTC 5835 / VPI 0990) (Eubacterium rectale).